The following is a 130-amino-acid chain: Small ribosomal subunit protein uS11 (130 aa).

The protein belongs to the universal ribosomal protein uS11 family. Part of the 30S ribosomal subunit. Interacts with proteins S7 and S18. Binds to IF-3.

Its function is as follows. Located on the platform of the 30S subunit, it bridges several disparate RNA helices of the 16S rRNA. Forms part of the Shine-Dalgarno cleft in the 70S ribosome. This Xylella fastidiosa (strain M23) protein is Small ribosomal subunit protein uS11.